The following is a 105-amino-acid chain: Protamine-2 (105 aa).

The interval 1 to 74 is disordered; it reads MVRYRMRSPS…RRSCRRRRRH (74 aa). Residues S8 and S10 each carry the phosphoserine modification. The span at 33–42 shows a compositional bias: basic and acidic residues; that stretch reads NPERVEDYGR. Basic residues predominate over residues 43–74; the sequence is THRGHHRHRRCSRKRLHRIHKRRRSCRRRRRH.

This sequence belongs to the protamine P2 family. Interacts with TDRP. In terms of processing, proteolytic processing into mature chains is required for histone eviction during spermatogenesis. Transition proteins (TNP1 and TNP2) are required for processing. As to expression, testis.

The protein localises to the nucleus. Its subcellular location is the chromosome. Protamines substitute for histones in the chromatin of sperm during the haploid phase of spermatogenesis. They compact sperm DNA into a highly condensed, stable and inactive complex. This is Protamine-2 (Prm2) from Rattus tunneyi (Tunney's rat).